Here is a 367-residue protein sequence, read N- to C-terminus: Glutamate 5-kinase (367 aa).

Lysine 10 contributes to the ATP binding site. Serine 50, aspartate 137, and asparagine 149 together coordinate substrate. Residues 169-170 (TD) and 211-217 (TGGMSTK) each bind ATP. One can recognise a PUA domain in the interval 275–353 (AGIITIDAGA…QDIEQVLGYE (79 aa)).

This sequence belongs to the glutamate 5-kinase family.

It localises to the cytoplasm. The enzyme catalyses L-glutamate + ATP = L-glutamyl 5-phosphate + ADP. The protein operates within amino-acid biosynthesis; L-proline biosynthesis; L-glutamate 5-semialdehyde from L-glutamate: step 1/2. Its function is as follows. Catalyzes the transfer of a phosphate group to glutamate to form L-glutamate 5-phosphate. The polypeptide is Glutamate 5-kinase (Pasteurella multocida (strain Pm70)).